We begin with the raw amino-acid sequence, 299 residues long: Bifunctional protein FolD (299 aa).

Residues 168-170, Ser-193, and Ile-234 contribute to the NADP(+) site; that span reads GRS.

The protein belongs to the tetrahydrofolate dehydrogenase/cyclohydrolase family. Homodimer.

The catalysed reaction is (6R)-5,10-methylene-5,6,7,8-tetrahydrofolate + NADP(+) = (6R)-5,10-methenyltetrahydrofolate + NADPH. The enzyme catalyses (6R)-5,10-methenyltetrahydrofolate + H2O = (6R)-10-formyltetrahydrofolate + H(+). It functions in the pathway one-carbon metabolism; tetrahydrofolate interconversion. In terms of biological role, catalyzes the oxidation of 5,10-methylenetetrahydrofolate to 5,10-methenyltetrahydrofolate and then the hydrolysis of 5,10-methenyltetrahydrofolate to 10-formyltetrahydrofolate. The chain is Bifunctional protein FolD from Bartonella tribocorum (strain CIP 105476 / IBS 506).